The following is a 220-amino-acid chain: Histone deacetylase complex subunit SAP30 (220 aa).

Residues 1–129 form an interaction with NCOR1 region; that stretch reads MNGFTPEEMS…QSVRNRRKRK (129 aa). A Phosphothreonine modification is found at Thr5. The segment at 67–115 adopts an Atypical zinc-finger fold; that stretch reads CCLREDGERCGRAAGNASFSKRIQKSISQKKVKIELDKSARHLYICDYH. Lys87 participates in a covalent cross-link: Glycyl lysine isopeptide (Lys-Gly) (interchain with G-Cter in SUMO2). The tract at residues 123 to 143 is disordered; sequence RNRRKRKGSDDDGGDSPVQDI. Positions 130 to 220 are interaction with SIN3A; the sequence is GSDDDGGDSP…SDLKADSGVH (91 aa). Phosphoserine is present on residues Ser131 and Ser138. Phosphothreonine is present on Thr145. Glycyl lysine isopeptide (Lys-Gly) (interchain with G-Cter in SUMO2) cross-links involve residues Lys194 and Lys214.

Belongs to the SAP30 family. As to quaternary structure, component of the histone deacetylase complex that includes at least SIN3A, HDAC1 and HDAC2. Found in a complex composed of at least SINHCAF, SIN3A, HDAC1, SAP30, RBBP4, OGT and TET1. Interacts with HDAC1. Interacts with SIN3A, SIN3B, HDAC2, RBBP4 and NCOR1. Interacts directly with SAMSN1. Interacts with HCFC1. Interacts with SAP30BP.

It is found in the nucleus. Functionally, involved in the functional recruitment of the Sin3-histone deacetylase complex (HDAC) to a specific subset of N-CoR corepressor complexes. Capable of transcription repression by N-CoR. Active in deacetylating core histone octamers (when in a complex) but inactive in deacetylating nucleosomal histones. This is Histone deacetylase complex subunit SAP30 from Mus musculus (Mouse).